The chain runs to 547 residues: MPTPIHVLPPHVARLIAAGEVVSRPLDVVRELVENALDAGASRIEIEVDGGGLERVQVRDNGSGIAAQSVPLAPARHATSKLTAGPETGSLSVTTLGFRGEALWAAAQAGELELTTRPAAQVGAARLRAQGDAVEVSRTSAPAGTTVTVSQLFARLPARLRTQASAAAEVRDITALLGRYVLHHSALHWRLTVDGDPRLTHAPADHRGAVATVYGPLSANRVLTLDTPGVRGVVSRPELTRARRDRMHFAVNGRPIVAPPELERAVIDAYAELLPAGTAPLCVLDLTVAPEDYDPNIHPAKQVVALADLPAVALRVRDAVAGALAGHPLVRAAPALIAPPEPHPAPTAGNFPDLTLLGVYQELYLLAQGEGDLWVVDAHAAHERALYERLGRELGTAAPLELPTPELLHLTPEQTARLHERGAELRGWGLTIEDFGAGLARLRTLPAALAALPVPRLHEVVVETALSGGPDPRREVLARLACLPALKAGMLDAERGALVLAALRECEQPWACPHGRPTVLRLSERDLAHAFGRRGVRDVARGRDSVV.

The protein belongs to the DNA mismatch repair MutL/HexB family.

In terms of biological role, this protein is involved in the repair of mismatches in DNA. It is required for dam-dependent methyl-directed DNA mismatch repair. May act as a 'molecular matchmaker', a protein that promotes the formation of a stable complex between two or more DNA-binding proteins in an ATP-dependent manner without itself being part of a final effector complex. The protein is DNA mismatch repair protein MutL of Deinococcus radiodurans (strain ATCC 13939 / DSM 20539 / JCM 16871 / CCUG 27074 / LMG 4051 / NBRC 15346 / NCIMB 9279 / VKM B-1422 / R1).